Here is a 1063-residue protein sequence, read N- to C-terminus: MKYNKTLALIPAILLAACGGGDKQSIDEKPRPGSMVYSFPMDGQADVSPKADIVLRFSHAITDDEATLQNKIILQSSGQSQPFTVTLIDSGKSLKLEPANPLATGEEFTVTFQEPLAAEGGRQITTPNATGDDGIQFATRGAYAGLAELANTADTFDIAWQVPASDSPFQAMNFSTFRFAMTQPVHPEWQSLGGSIQLRDASGQEVPATVLVKGNRITVDPCVTPEPSQCGSKQDILNTGETYTLQLTNLASLTDSSEENRFTGEFTFTPRDTGPTVVLQQTAVDSGNGELTSVLNGQALNAVTLNSVLQGEAGPSQQTGDLFAELAYAPAFDADEALPLRIPKGSVLKSTSLNVLVGGKVQVLDAATGEDQQTGTIKVTMLSDASGYMSPNQYTDDINAPRHITLFMDVSMNTEAAQPNAALSQDLMGVELRGIALVRDGVLTIDAIGMVEPNLLGQEFTDSTIAFHLQAATDADSVLDAENLRELDATPPSLVSWMPGPANAVPATRQSMQRPGDPIILFFDEPLDPASVENGVELIENGAPVTNLQARLDGTALVLNPQGGLKHGVPYSVSVDGLTDLAGNRAMVSPLSFELDSIEENGSPGNKGFPLALTTYPGYPCETDYENTLDLENGVFGKCWTADANNAGDVLPVSKMPADRPITVVFSKSLDLDSVIVGETFTVQEIAQEANGTVTVLNQQVAGRLEKNNQRIRFYPEQPWQVGAHYRYILASSEQSGTCTPGQYTSICDEDGIPLKTDLLEGLNDGDGNNGPDNLEIVFTGSEARSTVFTPLRNLPIRDTNSNLAIDCDDLGSESCLEPFNHQGSDSEGFLPSANAAKLLVTQDHAEDARVGCAVDGADCPRKKFIYQTYALNTEVIGPTVDPDTGRDAVKVLLYPTQLATTSLDVHLSLLSTVSSTGPQVLRMRYAKDDPECTGASCARNSLIPGYITENDQGETIFKTKAELFLDAPGLKATASILGIPTDLPLTHNLFGYPFTLELEGRVVFFDDGRMQIEQRNFNVPHIDVEAVALGIINTEIPLIIPEQGVYLNFISNPVKEIPAQYE.

The first 17 residues, 1-17 (MKYNKTLALIPAILLAA), serve as a signal peptide directing secretion. Cys-18 carries the N-palmitoyl cysteine lipid modification. Cys-18 carries S-diacylglycerol cysteine lipidation.

As to quaternary structure, interacts with the outer membrane protein AupA.

It localises to the cell inner membrane. Functionally, required for growth on alkanes. Probably involved in the uptake of micelle-solubilized alkanes. May facilitate the transfer of alkanes from the outer membrane to the inner membrane. The sequence is that of Alkane uptake protein B from Marinobacter nauticus (strain ATCC 49840 / DSM 8798 / CIP 103578 / SP17) (Marinobacter hydrocarbonoclasticus).